A 72-amino-acid chain; its full sequence is uncharacterized protein (72 aa).

Belongs to the phage portal family. HK97 subfamily.

This is an uncharacterized protein from Rickettsia conorii (strain ATCC VR-613 / Malish 7).